The following is a 785-amino-acid chain: Copal-8-ol diphosphate hydratase TPSSA3, chloroplastic (785 aa).

R240 contacts substrate. Mg(2+) contacts are provided by D372 and D374. The DXDD motif signature appears at 372–375 (DIDD). R459 serves as a coordination point for substrate.

It belongs to the terpene synthase family. The cofactor is Mg(2+).

The protein localises to the plastid. The protein resides in the chloroplast. It carries out the reaction (2E,6E,10E)-geranylgeranyl diphosphate + H2O = 8-hydroxycopalyl diphosphate. Its pathway is secondary metabolite biosynthesis; terpenoid biosynthesis. In terms of biological role, involved in the biosynthesis of labdane-type diterpenoid including sclareol, a diterpene-diol that is used as fragrance and flavoring, and has anticancer effects (able to kill leukemic and colon cancer cells by apoptosis). Sclareol can also be used as synthesis precursor of ambergris substitution fragance products such as ambrox. Terpene synthase that produces 8-hydroxycopalyl diphosphate from geranylgeranyl diphosphate (GGPP). This Salvia sclarea (Clary sage) protein is Copal-8-ol diphosphate hydratase TPSSA3, chloroplastic.